Here is a 241-residue protein sequence, read N- to C-terminus: Adenosylcobinamide-GDP ribazoletransferase (241 aa).

Transmembrane regions (helical) follow at residues 34 to 54, 55 to 75, 109 to 129, 133 to 153, 165 to 185, 186 to 206, and 221 to 241; these read RIPAYFTIVGYIPGLIYFTGS, FLSLNFGIIAPLLSIVLGFYL, VGPFAVFYGVLYVIVFWELIT, PVAFVFGSVFGRYTMDVVLVF, MLFPFNRFLLVPATLFTLPLL, LIDVKLFLVSIFSSWLVGFLI, and VLGGSCLIGQIVVLLILNYLI.

The protein belongs to the CobS family. The cofactor is Mg(2+).

It localises to the cell inner membrane. It catalyses the reaction alpha-ribazole + adenosylcob(III)inamide-GDP = adenosylcob(III)alamin + GMP + H(+). The catalysed reaction is alpha-ribazole 5'-phosphate + adenosylcob(III)inamide-GDP = adenosylcob(III)alamin 5'-phosphate + GMP + H(+). It functions in the pathway cofactor biosynthesis; adenosylcobalamin biosynthesis; adenosylcobalamin from cob(II)yrinate a,c-diamide: step 7/7. In terms of biological role, joins adenosylcobinamide-GDP and alpha-ribazole to generate adenosylcobalamin (Ado-cobalamin). Also synthesizes adenosylcobalamin 5'-phosphate from adenosylcobinamide-GDP and alpha-ribazole 5'-phosphate. The protein is Adenosylcobinamide-GDP ribazoletransferase of Fervidobacterium nodosum (strain ATCC 35602 / DSM 5306 / Rt17-B1).